The chain runs to 1073 residues: Exocyst complex component sec8 (1073 aa).

Residues Met-1–Lys-11 are compositionally biased toward basic and acidic residues. Residues Met-1–Ser-33 form a disordered region. Positions Glu-22–Ser-33 are enriched in polar residues. A Phosphothreonine modification is found at Thr-449. Position 450 is a phosphoserine (Ser-450).

Component of the exocyst complex composed of sec3, sec5, sec6, sec8, sec10, sec15 and exo70.

The protein resides in the cytoplasm. The protein localises to the cell tip. Its subcellular location is the cytoskeleton. It localises to the cytoplasmic vesicle. Functionally, component of the exocyst complex involved in the delivery of secretory vesicles to the plasma membrane. Also required for polarized cell growth and division septum assembly. The exocyst complex plays an important role in the targeting of rho3, as well as the two main hydrolases required for cell separation, eng1 and agn1, to the cell wall surrounding the septum before cell separation begins. This Schizosaccharomyces pombe (strain 972 / ATCC 24843) (Fission yeast) protein is Exocyst complex component sec8 (sec8).